The following is a 181-amino-acid chain: uncharacterized protein (181 aa).

Belongs to the isochorismatase family.

This is an uncharacterized protein from Bacillus subtilis (strain 168).